The chain runs to 304 residues: RIGRLVLRAAIDKGASVVAVNDPFIDVNYMVYLFKFDSTHGRFKGTVVAEGGFLVVNGQKITVFSERDPANINWASAGAEYVVESTGVFTTIEKASTHLKGGAKKVVISAPSADAPMFVCGVNLDAYKPDMKVVSNASCTTNCLAPLAKVINDNFEIVEGLMTTVHATTATQKTVDGPSGKLWRDGRGAAQNIIPAATGAAKAVGKVIPALNGKLTGMAFRVPTPNVSVVDLTVRLGKGASYDEIKAKVQEAANGPLKGILGYTDEEVVSTDFLSDTHSSVFDAKAGISLNDKFVKLISWYDNE.

Residues 1–2, aspartate 22, and arginine 67 each bind NAD(+); that span reads RI. D-glyceraldehyde 3-phosphate is bound by residues 138-140, threonine 169, 198-199, and arginine 221; these read SCT and TG. Residue cysteine 139 is the Nucleophile of the active site. Asparagine 303 is a binding site for NAD(+).

Belongs to the glyceraldehyde-3-phosphate dehydrogenase family. As to quaternary structure, homotetramer.

The protein localises to the cytoplasm. It catalyses the reaction D-glyceraldehyde 3-phosphate + phosphate + NAD(+) = (2R)-3-phospho-glyceroyl phosphate + NADH + H(+). The protein operates within carbohydrate degradation; glycolysis; pyruvate from D-glyceraldehyde 3-phosphate: step 1/5. This Drosophila subobscura (Fruit fly) protein is Glyceraldehyde-3-phosphate dehydrogenase 2 (Gapdh2).